A 1075-amino-acid chain; its full sequence is DNA-directed RNA polymerase subunit beta (1075 aa).

It belongs to the RNA polymerase beta chain family. As to quaternary structure, in plastids the minimal PEP RNA polymerase catalytic core is composed of four subunits: alpha, beta, beta', and beta''. When a (nuclear-encoded) sigma factor is associated with the core the holoenzyme is formed, which can initiate transcription.

It localises to the plastid. It is found in the chloroplast. It carries out the reaction RNA(n) + a ribonucleoside 5'-triphosphate = RNA(n+1) + diphosphate. Functionally, DNA-dependent RNA polymerase catalyzes the transcription of DNA into RNA using the four ribonucleoside triphosphates as substrates. The chain is DNA-directed RNA polymerase subunit beta from Saccharum officinarum (Sugarcane).